A 329-amino-acid chain; its full sequence is MAKAPMRVAVTGAAGQIGYSLLFRIANGDLLGKDQPVILQLLEIDNEKAQNALKGVIMEIDDCAFPLLAGVSAHSDPMTAFKDVDIALLVGARPRGPGMERKDLLEANAQIFTVQGKALDAVASRNVKVLVVGNPANTNAYIAMKSAPNLPAKNFTAMLRLDHNRALSQIAAKTGKPVTAIEKLTVWGNHSPTMYPDYRFATIDGKSVKEAINDEVWNKDVFLPTVGKRGAAIIEARGVSSAASAANAAIDHVRDWVLGTNGKWVTMGIPSDGSYGIPKDTMFGFPVTTENGEYKIVQGLEIDAFSQERINLTLKELSEEREGVKHLLA.

An NAD(+)-binding site is contributed by 12-18; sequence GAAGQIG. Substrate contacts are provided by R95 and R101. NAD(+)-binding positions include N108, Q115, and 132–134; that span reads VGN. Residues N134 and R165 each coordinate substrate. H190 functions as the Proton acceptor in the catalytic mechanism.

The protein belongs to the LDH/MDH superfamily. MDH type 2 family.

It carries out the reaction (S)-malate + NAD(+) = oxaloacetate + NADH + H(+). Functionally, catalyzes the reversible oxidation of malate to oxaloacetate. The sequence is that of Malate dehydrogenase from Herminiimonas arsenicoxydans.